The sequence spans 97 residues: Small ribosomal subunit protein bS6 (97 aa).

Belongs to the bacterial ribosomal protein bS6 family.

In terms of biological role, binds together with bS18 to 16S ribosomal RNA. The chain is Small ribosomal subunit protein bS6 from Lactococcus lactis subsp. cremoris (strain MG1363).